Here is a 60-residue protein sequence, read N- to C-terminus: Large ribosomal subunit protein uL30 (60 aa).

This sequence belongs to the universal ribosomal protein uL30 family. In terms of assembly, part of the 50S ribosomal subunit.

The polypeptide is Large ribosomal subunit protein uL30 (Cupriavidus metallidurans (strain ATCC 43123 / DSM 2839 / NBRC 102507 / CH34) (Ralstonia metallidurans)).